We begin with the raw amino-acid sequence, 1108 residues long: Retinal guanylyl cyclase 2 (1108 aa).

The first 50 residues, 1-50, serve as a signal peptide directing secretion; that stretch reads MFLGPWPFSRLLSWFAISSRLSGQHGLTSSKFLRYLCLLALLPLIWWGQA. Residues 51–465 lie on the Extracellular side of the membrane; the sequence is LPYKIGVIGP…QGKICQGGID (415 aa). A disulfide bond links Cys-104 and Cys-132. A helical transmembrane segment spans residues 466 to 490; that stretch reads PALAMMVCFALLLALLSINGFAYFI. Topologically, residues 491 to 1108 are cytoplasmic; sequence RRRINKIQLI…AERQLVRNKP (618 aa). Residues 532–812 form the Protein kinase domain; that stretch reads FQIISEVQSG…DEIFNQFKTF (281 aa). A Guanylate cyclase domain is found at 884 to 1014; sequence TLYFSDIVGF…DTVNTASRME (131 aa).

The protein belongs to the adenylyl cyclase class-4/guanylyl cyclase family. Homodimer. Interacts with RD3; promotes the exit of GUCY2F from the endoplasmic reticulum and its trafficking to the photoreceptor outer segments. There are 9 conserved cysteine residues in sensory guanylate cyclases, 6 in the extracellular domain, which may be involved in intra- or interchain disulfide bonds. In terms of tissue distribution, expressed only in the eye.

Its subcellular location is the membrane. The protein localises to the photoreceptor outer segment membrane. It carries out the reaction GTP = 3',5'-cyclic GMP + diphosphate. Activated by GUCA1B when free calcium ions concentration is low, and inhibited by GUCA1B when free calcium ions concentration is high. Inhibited by RD3. Responsible for the synthesis of cyclic GMP (cGMP) in rods and cones of photoreceptors. Plays an essential role in phototransduction, by mediating cGMP replenishment. May also participate in the trafficking of membrane-asociated proteins to the photoreceptor outer segment membrane. The chain is Retinal guanylyl cyclase 2 (Gucy2f) from Rattus norvegicus (Rat).